The chain runs to 133 residues: Ribonuclease VapC17 (133 aa).

Aspartate 7 and aspartate 93 together coordinate Mg(2+). The PINc domain occupies 30-118; the sequence is AICDIGELEW…HHDRDYKRIA (89 aa).

This sequence belongs to the PINc/VapC protein family. Requires Mg(2+) as cofactor.

Toxic component of a type II toxin-antitoxin (TA) system. An RNase. The cognate antitoxin is VapB17. In Mycobacterium tuberculosis (strain CDC 1551 / Oshkosh), this protein is Ribonuclease VapC17.